The sequence spans 208 residues: Protein-methionine-sulfoxide reductase heme-binding subunit MsrQ (208 aa).

6 helical membrane-spanning segments follow: residues 16–36 (IAVFVACLLPLVWYGARFVGG), 53–73 (WGLIFLLASLAATPARLLWGW), 82–102 (MVGLFAFFYVCLHLLSYIGLD), 118–138 (TYITVGMAALLLLVPLAVTST), 156–176 (LVYPAAVLGVLHYMLMVKADL), and 178–198 (EPLIFAGILGLLLAVRLVPAV).

This sequence belongs to the MsrQ family. Heterodimer of a catalytic subunit (MsrP) and a heme-binding subunit (MsrQ). The cofactor is FMN. It depends on heme b as a cofactor.

It localises to the cell inner membrane. Its function is as follows. Part of the MsrPQ system that repairs oxidized periplasmic proteins containing methionine sulfoxide residues (Met-O), using respiratory chain electrons. Thus protects these proteins from oxidative-stress damage caused by reactive species of oxygen and chlorine generated by the host defense mechanisms. MsrPQ is essential for the maintenance of envelope integrity under bleach stress, rescuing a wide series of structurally unrelated periplasmic proteins from methionine oxidation. MsrQ provides electrons for reduction to the reductase catalytic subunit MsrP, using the quinone pool of the respiratory chain. The chain is Protein-methionine-sulfoxide reductase heme-binding subunit MsrQ from Rhodospirillum rubrum (strain ATCC 11170 / ATH 1.1.1 / DSM 467 / LMG 4362 / NCIMB 8255 / S1).